The following is a 117-amino-acid chain: Hydrogenase maturation factor HypA (117 aa).

H2 contributes to the Ni(2+) binding site. Residues C73, C76, C89, and C92 each coordinate Zn(2+).

It belongs to the HypA/HybF family.

Its function is as follows. Involved in the maturation of [NiFe] hydrogenases. Required for nickel insertion into the metal center of the hydrogenase. The sequence is that of Hydrogenase maturation factor HypA from Shewanella baltica (strain OS185).